Consider the following 356-residue polypeptide: MSSEMAAKSVKAFGLALKDSSGLFSPFNFSRRATGEHDVQLKVLYCGVCNFDNLMRRNKYGRTKFPYVFGHEIVGVVTEVGSNVKKFKIGNKVGVSFIVDTCRECERCKIGQQIACKKAVSSDGFFETPGYGGCSNIFVADENYVILWPENLPMDSGAPLLCIGITCYNPLRRFGLDKPGVRVGIVGLGAVGHLAIKFAKAFGARVTLISSSPGKKDEAFQKFGVDSFLVSSNAEEMQAAAETLDGILDTVPVVHPLEPLFALLKPLGKLIIIGEPHKPFEVSAMSLMEGGKIISASTGGSIKDTQEIVDFAAEHNVVADVEVIPVDYVNTAMERLDKADVKYRFVIDIGNTFKSP.

Zn(2+) is bound by residues Cys49, His71, Cys102, Cys105, Cys108, Cys116, and Cys162. 187–192 serves as a coordination point for NAD(+); sequence GLGAVG.

It belongs to the zinc-containing alcohol dehydrogenase family. Zn(2+) serves as cofactor. Expressed in leaf epidermis.

It catalyses the reaction (3R)-3-hydroxy-16-methoxy-2,3-dihydrotabersonine + A = (3R)-1,2-didehydro-3-hydroxy-16-methoxy-2,3-dihydrotabersonine + AH2. The catalysed reaction is (3R)-3-hydroxy-2,3-dihydrotabersonine + A = (3R)-1,2-didehydro-3-hydroxy-2,3-dihydrotabersonine + AH2. Its pathway is alkaloid biosynthesis; vindoline biosynthesis. Converts the unstable imine alcohols produced by CYP71D1V2/T3O into 3-hydroxy-16-methoxy-2,3-dihydrotabersonine or 3-hydroxy-2,3-dihydrotabersonine. This is 16-methoxy-2,3-dihydro-3-hydroxytabersonine synthase from Catharanthus roseus (Madagascar periwinkle).